The sequence spans 151 residues: UPF0208 membrane protein CKO_00500 (151 aa).

The next 2 membrane-spanning stretches (helical) occupy residues 46-65 and 69-91; these read YAIR…QIAL and LGPA…WWLG.

The protein belongs to the UPF0208 family.

The protein localises to the cell inner membrane. The protein is UPF0208 membrane protein CKO_00500 of Citrobacter koseri (strain ATCC BAA-895 / CDC 4225-83 / SGSC4696).